A 364-amino-acid chain; its full sequence is Flavonoid 3'-O-methyltransferase 3 (364 aa).

Aspartate 232 serves as a coordination point for S-adenosyl-L-methionine. The active-site Proton acceptor is the histidine 270.

It belongs to the class I-like SAM-binding methyltransferase superfamily. Cation-independent O-methyltransferase family. Homodimer.

The catalysed reaction is quercetin + S-adenosyl-L-methionine = isorhamnetin + S-adenosyl-L-homocysteine + H(+). The enzyme catalyses luteolin + S-adenosyl-L-methionine = chrysoeriol + S-adenosyl-L-homocysteine + H(+). It catalyses the reaction a 3'-hydroxyflavone + S-adenosyl-L-methionine = a 3'-methoxyflavone + S-adenosyl-L-homocysteine + H(+). It carries out the reaction rhamnetin + S-adenosyl-L-methionine = rhamnacene + S-adenosyl-L-homocysteine + H(+). The catalysed reaction is 3',4',7,8-tetrahydroxyflavone + S-adenosyl-L-methionine = 4',7,8-trihydroxy-3'-methoxyflavone-7-olate + S-adenosyl-L-homocysteine + H(+). The enzyme catalyses taxifolin + S-adenosyl-L-methionine = taxifolin 3'-methyl ether + S-adenosyl-L-homocysteine + H(+). The protein operates within flavonoid metabolism. Its function is as follows. Flavonoid 3'-O-methyltransferase involved in the biosynthesis of polymethoxylated flavonoids natural products such as pebrellin, aroma compounds which contribute to the flavor of peppermint, and exhibit pharmacological activities such as anti-allergic, anti-oxidant, antibacterial, anti-proliferative, and anti-inflammatory effects. Catalyzes S-adenosylmethionine-dependent regioselective 3'-O-methylation of flavonoids; active on various hydroxylated flavonoid substrates, including quercetin, rhamnetin, luteolin (LUT), 7,8,3'4'-tetrahydroxy-flavone and taxifolin, and, with a lower efficiency, eupatorin and hesperetin. The sequence is that of Flavonoid 3'-O-methyltransferase 3 from Mentha piperita (Peppermint).